The primary structure comprises 602 residues: Phosphoenolpyruvate carboxykinase [GTP] (602 aa).

Substrate contacts are provided by residues R89 and 211-213; that span reads YAG. K220 and H239 together coordinate Mn(2+). Residue S260 participates in substrate binding. 261–266 serves as a coordination point for GTP; sequence GSGKTS. S262 is a catalytic residue. D277 provides a ligand contact to Mn(2+). 367 to 369 contacts substrate; that stretch reads NAR. Positions 369 and 400 each coordinate GTP.

Belongs to the phosphoenolpyruvate carboxykinase [GTP] family. Requires Mn(2+) as cofactor.

It is found in the cytoplasm. It carries out the reaction oxaloacetate + GTP = phosphoenolpyruvate + GDP + CO2. It functions in the pathway carbohydrate biosynthesis; gluconeogenesis. Its function is as follows. Catalyzes the conversion of oxaloacetate (OAA) to phosphoenolpyruvate (PEP), the rate-limiting step in the metabolic pathway that produces glucose from lactate and other precursors derived from the citric acid cycle. This Sulfurisphaera tokodaii (strain DSM 16993 / JCM 10545 / NBRC 100140 / 7) (Sulfolobus tokodaii) protein is Phosphoenolpyruvate carboxykinase [GTP].